Reading from the N-terminus, the 921-residue chain is Inner nuclear membrane protein Man1 (921 aa).

Residues 7–51 (AAAPQQLSDEELFSQLRRYGLSPGPVTESTRPVYLKKLKKLREEE) enclose the LEM domain. Residue Ser-28 is modified to Phosphoserine. 3 disordered regions span residues 47–97 (LREE…AYLR), 136–357 (SSDE…GGCG), and 374–395 (LAPLLSPPSPDGDSTLESPTGP). Composition is skewed to low complexity over residues 53–62 (QQQQQQQQQQ) and 72–85 (TRNSNNNNTATAMG). Phosphoserine occurs at positions 136, 137, and 140. Positions 217–237 (AAEDADEELADGEDRDPEAEE) are enriched in acidic residues. Ser-261, Ser-263, and Ser-287 each carry phosphoserine. Residues 263 to 275 (SEEEEEEGEEDGD) are compositionally biased toward acidic residues. A compositionally biased stretch (polar residues) spans 308-317 (SGGSRQETSV). Residues 348 to 357 (PGGGGGGGCG) show a composition bias toward gly residues. Ser-412 carries the phosphoserine modification. 2 helical membrane-spanning segments follow: residues 486–506 (MFLLTAACLFFLILGLTYLGM) and 637–657 (AFITVTHRLLLLCLGVVLVCV). An interaction with SMAD1, SMAD2, SMAD3 and SMAD5 region spans residues 709-921 (VRDSLIQPQD…TGLANSQGSS (213 aa)). A DNA-binding region spans residues 717 to 736 (QDRKKMKKVWDRAVDFLAAN). A Phosphoserine modification is found at Ser-787. Position 893 is a phosphothreonine (Thr-893). Ser-921 carries the post-translational modification Phosphoserine.

In terms of assembly, interacts with SMAD1, SMAD2, SMAD3 and SMAD5. Binds to both phosphorylated and unphosphorylated R-SMADS.

The protein resides in the nucleus inner membrane. In terms of biological role, can function as a specific repressor of TGF-beta, activin, and BMP signaling through its interaction with the R-SMAD proteins. Antagonizes TGF-beta-induced cell proliferation arrest. The sequence is that of Inner nuclear membrane protein Man1 (Lemd3) from Mus musculus (Mouse).